Here is a 156-residue protein sequence, read N- to C-terminus: ATP synthase subunit b (156 aa).

A helical membrane pass occupies residues L7–I29.

Belongs to the ATPase B chain family. F-type ATPases have 2 components, F(1) - the catalytic core - and F(0) - the membrane proton channel. F(1) has five subunits: alpha(3), beta(3), gamma(1), delta(1), epsilon(1). F(0) has three main subunits: a(1), b(2) and c(10-14). The alpha and beta chains form an alternating ring which encloses part of the gamma chain. F(1) is attached to F(0) by a central stalk formed by the gamma and epsilon chains, while a peripheral stalk is formed by the delta and b chains.

It localises to the cell inner membrane. F(1)F(0) ATP synthase produces ATP from ADP in the presence of a proton or sodium gradient. F-type ATPases consist of two structural domains, F(1) containing the extramembraneous catalytic core and F(0) containing the membrane proton channel, linked together by a central stalk and a peripheral stalk. During catalysis, ATP synthesis in the catalytic domain of F(1) is coupled via a rotary mechanism of the central stalk subunits to proton translocation. Functionally, component of the F(0) channel, it forms part of the peripheral stalk, linking F(1) to F(0). This chain is ATP synthase subunit b, found in Aliivibrio salmonicida (strain LFI1238) (Vibrio salmonicida (strain LFI1238)).